Here is an 842-residue protein sequence, read N- to C-terminus: Glucans biosynthesis glucosyltransferase H (842 aa).

The next 8 helical transmembrane spans lie at 140–160, 194–214, 513–533, 568–588, 600–620, 622–642, 656–676, and 680–700; these read ILLL…KTIL, ILIL…TALM, VFLT…FLAL, IALF…SIIL, FIRV…LAPV, MLFH…VWNS, FMRH…MAWL, and FLFW…VSAI.

It belongs to the glycosyltransferase 2 family. OpgH subfamily.

Its subcellular location is the cell inner membrane. It functions in the pathway glycan metabolism; osmoregulated periplasmic glucan (OPG) biosynthesis. Involved in the biosynthesis of osmoregulated periplasmic glucans (OPGs). The chain is Glucans biosynthesis glucosyltransferase H from Klebsiella pneumoniae (strain 342).